The primary structure comprises 304 residues: tRNA pseudouridine synthase B (304 aa).

Residue aspartate 38 is the Nucleophile of the active site. The 76-residue stretch at 227–302 (LPKVEIYKDF…RIFKLKKVFK (76 aa)) folds into the PUA domain.

This sequence belongs to the pseudouridine synthase TruB family. Type 1 subfamily.

The enzyme catalyses uridine(55) in tRNA = pseudouridine(55) in tRNA. Functionally, responsible for synthesis of pseudouridine from uracil-55 in the psi GC loop of transfer RNAs. In Thermosipho melanesiensis (strain DSM 12029 / CIP 104789 / BI429), this protein is tRNA pseudouridine synthase B.